A 134-amino-acid chain; its full sequence is Small ribosomal subunit protein uS12 (134 aa).

The residue at position 89 (D89) is a 3-methylthioaspartic acid. The disordered stretch occupies residues 109-134 (KRNVSRSKYGAKKGKAGAAPTTGKKK). Basic residues predominate over residues 111 to 123 (NVSRSKYGAKKGK). Residues 124–134 (AGAAPTTGKKK) show a composition bias toward low complexity.

Belongs to the universal ribosomal protein uS12 family. In terms of assembly, part of the 30S ribosomal subunit. Contacts proteins S8 and S17. May interact with IF1 in the 30S initiation complex.

With S4 and S5 plays an important role in translational accuracy. In terms of biological role, interacts with and stabilizes bases of the 16S rRNA that are involved in tRNA selection in the A site and with the mRNA backbone. Located at the interface of the 30S and 50S subunits, it traverses the body of the 30S subunit contacting proteins on the other side and probably holding the rRNA structure together. The combined cluster of proteins S8, S12 and S17 appears to hold together the shoulder and platform of the 30S subunit. This is Small ribosomal subunit protein uS12 from Wolinella succinogenes (strain ATCC 29543 / DSM 1740 / CCUG 13145 / JCM 31913 / LMG 7466 / NCTC 11488 / FDC 602W) (Vibrio succinogenes).